The primary structure comprises 172 residues: Diphosphoinositol polyphosphate phosphohydrolase 1 (172 aa).

Met-1 is modified (N-acetylmethionine). Substrate-binding positions include Arg-10, 18 to 20 (KKR), and 39 to 41 (SSR). The region spanning 17-142 (YKKRAACLCF…KPVQASYFET (126 aa)) is the Nudix hydrolase domain. Gly-50 and Glu-66 together coordinate Mg(2+). A Nudix box motif is present at residues 51 to 72 (GGMEPEEEPSVAAVREVCEEAG). The active-site Proton acceptor is Glu-69. Glu-70 serves as a coordination point for Mg(2+). Residues 89-91 (RKH), Arg-115, and Lys-133 each bind substrate.

Belongs to the Nudix hydrolase family. DIPP subfamily. In terms of assembly, monomer. Mg(2+) serves as cofactor. Requires Mn(2+) as cofactor. Zn(2+) is required as a cofactor. In terms of tissue distribution, widely expressed. Expressed at higher level in brain, heart, pancreas and liver. Also expressed in placenta, lung and kidney.

The protein localises to the cytoplasm. The protein resides in the nucleus. It catalyses the reaction diphospho-myo-inositol polyphosphate + H2O = myo-inositol polyphosphate + phosphate.. The enzyme catalyses 5-diphospho-1D-myo-inositol 1,2,3,4,6-pentakisphosphate + H2O = 1D-myo-inositol hexakisphosphate + phosphate + H(+). It carries out the reaction 3,5-bis(diphospho)-1D-myo-inositol 1,2,4,6-tetrakisphosphate + H2O = 3-diphospho-1D-myo-inositol 1,2,4,5,6-pentakisphosphate + phosphate + 2 H(+). The catalysed reaction is [phosphate](n+1) + n H2O = (n+1) phosphate + n H(+). It catalyses the reaction P(1),P(5)-bis(5'-adenosyl) pentaphosphate + H2O = ADP + ATP + 2 H(+). The enzyme catalyses P(1),P(6)-bis(5'-adenosyl) hexaphosphate + H2O = 2 ATP + 2 H(+). It carries out the reaction P(1),P(4)-bis(5'-adenosyl) tetraphosphate + H2O = AMP + ATP + 2 H(+). The catalysed reaction is a 5'-end (N(7)-methyl 5'-triphosphoguanosine)-ribonucleoside in mRNA + H2O = N(7)-methyl-GMP + a 5'-end diphospho-ribonucleoside in mRNA + 2 H(+). It catalyses the reaction a 5'-end (N(7)-methyl 5'-triphosphoguanosine)-ribonucleoside in mRNA + H2O = N(7)-methyl-GDP + a 5'-end phospho-ribonucleoside in mRNA + 2 H(+). Its activity is regulated as follows. Endopolyphospahatase activity is inhibited by NaF, NaPPi, beta-glycerol phosphate and heparin. 5-diphosphoinositol pentakisphosphate (5-InsP7) inhibits its mRNA decapping activity. In terms of biological role, cleaves a beta-phosphate from the diphosphate groups in PP-InsP5 (diphosphoinositol pentakisphosphate) and [PP]2-InsP4 (bisdiphosphoinositol tetrakisphosphate), suggesting that it may play a role in signal transduction. InsP6 (inositol hexakisphosphate) is not a substrate. Acts as a negative regulator of the ERK1/2 pathway. Also able to catalyze the hydrolysis of dinucleoside oligophosphates, with diadenosine 5',5'''-P1,P6-hexaphosphate (Ap6A) and diadenosine 5',5'''- P1,P5-pentaphosphate (Ap5A) being the preferred substrates. The major reaction products are ADP and p4a from Ap6A and ADP and ATP from Ap5A. Also able to hydrolyze 5-phosphoribose 1-diphosphate. Acts as a decapping enzyme that modulates the stability of a subset of mRNAs implicated in cell motility. Hydrolyzes monomethylated capped RNA after both the alpha- and beta-phosphates generating m7GMP + ppRNA and m7GDP + pRNA. Can hydrolyze unmethylated capped RNAs. Divalent cations zinc, magnesium and manganese determine its substrate specificity. Exhibits diphosphoinositol polyphosphate phosphohydrolase in the presence of magnesium ions, diadenosine hexaphosphate hydrolase activity in the presence of manganese ions and endopolyphosphatase activity in the presence of zinc ions. Plays an important role in limiting DNA damage and maintaining cell survival upon oxidative stress via its endopolyphosphatase activity. The protein is Diphosphoinositol polyphosphate phosphohydrolase 1 of Homo sapiens (Human).